Consider the following 301-residue polypeptide: tRNA pseudouridine synthase B (301 aa).

The active-site Nucleophile is the aspartate 48.

This sequence belongs to the pseudouridine synthase TruB family. Type 1 subfamily.

The enzyme catalyses uridine(55) in tRNA = pseudouridine(55) in tRNA. In terms of biological role, responsible for synthesis of pseudouridine from uracil-55 in the psi GC loop of transfer RNAs. This chain is tRNA pseudouridine synthase B, found in Mycobacterium ulcerans (strain Agy99).